A 351-amino-acid chain; its full sequence is UDP-N-acetylenolpyruvoylglucosamine reductase (351 aa).

Residues 11-213 (GVGGSIACFI…KQVRDQVLRI (203 aa)) enclose the FAD-binding PCMH-type domain. Arg158 is an active-site residue. Ser239 serves as the catalytic Proton donor. Residue Glu343 is part of the active site.

Belongs to the MurB family. The cofactor is FAD.

The protein localises to the cytoplasm. It catalyses the reaction UDP-N-acetyl-alpha-D-muramate + NADP(+) = UDP-N-acetyl-3-O-(1-carboxyvinyl)-alpha-D-glucosamine + NADPH + H(+). It functions in the pathway cell wall biogenesis; peptidoglycan biosynthesis. Cell wall formation. This is UDP-N-acetylenolpyruvoylglucosamine reductase from Tropheryma whipplei (strain TW08/27) (Whipple's bacillus).